The chain runs to 122 residues: Large ribosomal subunit protein uL14 (122 aa).

It belongs to the universal ribosomal protein uL14 family. As to quaternary structure, part of the 50S ribosomal subunit. Forms a cluster with proteins L3 and L19. In the 70S ribosome, L14 and L19 interact and together make contacts with the 16S rRNA in bridges B5 and B8.

Functionally, binds to 23S rRNA. Forms part of two intersubunit bridges in the 70S ribosome. This chain is Large ribosomal subunit protein uL14, found in Enterococcus faecalis (strain ATCC 700802 / V583).